A 319-amino-acid polypeptide reads, in one-letter code: ATP-dependent 6-phosphofructokinase (319 aa).

Position 11 (Gly11) interacts with ATP. An ADP-binding site is contributed by 21–25 (RAVVR). Residues 72 to 73 (RC) and 102 to 105 (GDGS) each bind ATP. Mg(2+) is bound at residue Asp103. Residue 125–127 (TID) participates in substrate binding. Catalysis depends on Asp127, which acts as the Proton acceptor. Arg154 is an ADP binding site. Substrate-binding positions include Arg162 and 169–171 (MGR). Residues 185–187 (GAE), Lys211, and 213–215 (KMH) contribute to the ADP site. Substrate is bound by residues Glu222, Arg243, and 249–252 (HIQR).

The protein belongs to the phosphofructokinase type A (PFKA) family. ATP-dependent PFK group I subfamily. Prokaryotic clade 'B1' sub-subfamily. As to quaternary structure, homotetramer. Requires Mg(2+) as cofactor.

The protein localises to the cytoplasm. The catalysed reaction is beta-D-fructose 6-phosphate + ATP = beta-D-fructose 1,6-bisphosphate + ADP + H(+). It functions in the pathway carbohydrate degradation; glycolysis; D-glyceraldehyde 3-phosphate and glycerone phosphate from D-glucose: step 3/4. With respect to regulation, allosterically activated by ADP and other diphosphonucleosides, and allosterically inhibited by phosphoenolpyruvate. In terms of biological role, catalyzes the phosphorylation of D-fructose 6-phosphate to fructose 1,6-bisphosphate by ATP, the first committing step of glycolysis. The sequence is that of ATP-dependent 6-phosphofructokinase from Clostridium botulinum (strain ATCC 19397 / Type A).